Reading from the N-terminus, the 172-residue chain is Carotene biosynthesis-related protein CBR, chloroplastic (172 aa).

The tract at residues 41-66 (AENNPSTPPPSSPSPPPPPPTPAAPT) is disordered. A compositionally biased stretch (pro residues) spans 46–63 (STPPPSSPSPPPPPPTPA). 2 consecutive transmembrane segments (helical) span residues 111 to 131 (PTLIALTFVLFSAASLIPAFA) and 152 to 172 (FAMIGFAAMLVYEGIQGIALF).

It belongs to the ELIP/psbS family.

The protein resides in the plastid. It is found in the chloroplast membrane. Its function is as follows. Putative zeaxanthin binding protein. That forms photoprotective complexes within the light-harvesting antennae. This Dunaliella salina (Green alga) protein is Carotene biosynthesis-related protein CBR, chloroplastic (CBR).